The primary structure comprises 104 residues: UPF0473 protein LJ_0477 (104 aa).

This sequence belongs to the UPF0473 family.

In Lactobacillus johnsonii (strain CNCM I-12250 / La1 / NCC 533), this protein is UPF0473 protein LJ_0477.